The chain runs to 215 residues: Pyrrolidone-carboxylate peptidase (215 aa).

Active-site residues include Glu-80, Cys-143, and His-167.

It belongs to the peptidase C15 family. Homotetramer.

Its subcellular location is the cytoplasm. It carries out the reaction Release of an N-terminal pyroglutamyl group from a polypeptide, the second amino acid generally not being Pro.. Its function is as follows. Removes 5-oxoproline from various penultimate amino acid residues except L-proline. The protein is Pyrrolidone-carboxylate peptidase of Bacillus cereus (strain G9842).